A 160-amino-acid polypeptide reads, in one-letter code: Troponin C, skeletal muscle (160 aa).

At threonine 2 the chain carries N-acetylthreonine. EF-hand domains are found at residues 15 to 50 (EMIAEFKAAFDMFDADGGGDISVKELGTVMRMLGQT), 51 to 86 (PTKEELDAIIEEVDEDGSGTIDFEEFLVMMVRQMKE), 91 to 126 (KSEEELAECFRIFDRNADGYIDAEELAEIFRASGEH), and 127 to 160 (VTEEEIESLMKDGDKNNDGRIDFDEFLKMMEGVQ). Ca(2+) contacts are provided by aspartate 28, aspartate 30, aspartate 34, glutamate 39, aspartate 64, aspartate 66, serine 68, threonine 70, glutamate 75, aspartate 104, asparagine 106, aspartate 108, tyrosine 110, glutamate 115, aspartate 140, asparagine 142, aspartate 144, arginine 146, and glutamate 151.

This sequence belongs to the troponin C family. In terms of tissue distribution, fast skeletal muscle.

Troponin is the central regulatory protein of striated muscle contraction. Tn consists of three components: Tn-I which is the inhibitor of actomyosin ATPase, Tn-T which contains the binding site for tropomyosin and Tn-C. The binding of calcium to Tn-C abolishes the inhibitory action of Tn on actin filaments. This chain is Troponin C, skeletal muscle (Tnnc2), found in Mus musculus (Mouse).